The chain runs to 118 residues: D-dopachrome decarboxylase (118 aa).

Pro2 is modified (N-acetylproline). The residue at position 33 (Lys33) is an N6-acetyllysine. Position 90 is a phosphoserine (Ser90).

Belongs to the MIF family. In terms of assembly, homotrimer.

The protein localises to the cytoplasm. It carries out the reaction D-dopachrome + H(+) = 5,6-dihydroxyindole + CO2. Functionally, tautomerization of D-dopachrome with decarboxylation to give 5,6-dihydroxyindole (DHI). The polypeptide is D-dopachrome decarboxylase (Ddt) (Mus musculus (Mouse)).